The following is a 253-amino-acid chain: Aspartic acid-rich protein (253 aa).

The N-terminal stretch at M1–K22 is a signal peptide. The interval D211 to D253 is disordered.

It belongs to the nucleosome assembly protein (NAP) family.

The chain is Aspartic acid-rich protein from Plasmodium falciparum (isolate fcm17 / Senegal).